We begin with the raw amino-acid sequence, 212 residues long: Pyridoxine/pyridoxamine 5'-phosphate oxidase (212 aa).

Substrate-binding positions include 7 to 10 and K65; that span reads REEY. FMN-binding positions include 60 to 65, 75 to 76, K82, and Q104; these read RTVLLK and FT. Substrate contacts are provided by Y122, R126, and S130. Residues 139–140 and W184 each bind FMN; that span reads QS. 190–192 is a substrate binding site; it reads RLH. R194 lines the FMN pocket.

The protein belongs to the pyridoxamine 5'-phosphate oxidase family. In terms of assembly, homodimer. It depends on FMN as a cofactor.

It catalyses the reaction pyridoxamine 5'-phosphate + O2 + H2O = pyridoxal 5'-phosphate + H2O2 + NH4(+). The enzyme catalyses pyridoxine 5'-phosphate + O2 = pyridoxal 5'-phosphate + H2O2. It functions in the pathway cofactor metabolism; pyridoxal 5'-phosphate salvage; pyridoxal 5'-phosphate from pyridoxamine 5'-phosphate: step 1/1. Its pathway is cofactor metabolism; pyridoxal 5'-phosphate salvage; pyridoxal 5'-phosphate from pyridoxine 5'-phosphate: step 1/1. In terms of biological role, catalyzes the oxidation of either pyridoxine 5'-phosphate (PNP) or pyridoxamine 5'-phosphate (PMP) into pyridoxal 5'-phosphate (PLP). The chain is Pyridoxine/pyridoxamine 5'-phosphate oxidase from Rippkaea orientalis (strain PCC 8801 / RF-1) (Cyanothece sp. (strain PCC 8801)).